Reading from the N-terminus, the 281-residue chain is NADPH-dependent 7-cyano-7-deazaguanine reductase (281 aa).

Residue 87 to 89 participates in substrate binding; it reads VES. Residue 89–90 participates in NADPH binding; the sequence is SK. Residue Cys-188 is the Thioimide intermediate of the active site. The active-site Proton donor is Asp-195. Residue 227-228 participates in substrate binding; that stretch reads HE. 256–257 is an NADPH binding site; sequence RG.

This sequence belongs to the GTP cyclohydrolase I family. QueF type 2 subfamily. As to quaternary structure, homodimer.

It localises to the cytoplasm. The enzyme catalyses 7-aminomethyl-7-carbaguanine + 2 NADP(+) = 7-cyano-7-deazaguanine + 2 NADPH + 3 H(+). It functions in the pathway tRNA modification; tRNA-queuosine biosynthesis. Catalyzes the NADPH-dependent reduction of 7-cyano-7-deazaguanine (preQ0) to 7-aminomethyl-7-deazaguanine (preQ1). The chain is NADPH-dependent 7-cyano-7-deazaguanine reductase from Aliivibrio fischeri (strain ATCC 700601 / ES114) (Vibrio fischeri).